We begin with the raw amino-acid sequence, 532 residues long: 4-amino-L-phenylalanyl-[CmlP-peptidyl-carrier-protein] 3-hydroxylase (532 aa).

6 residues coordinate Fe cation: H305, H307, D309, H310, E377, and D403.

This sequence belongs to the metallo-beta-lactamase superfamily. As to quaternary structure, homodimer. Requires Fe(2+) as cofactor.

The catalysed reaction is 4-amino-L-phenylalanyl-[peptidyl-carrier protein] + AH2 + O2 = (2R)-2-(4-aminophenyl)-L-seryl-[peptidyl-carrier protein] + A + H2O. The protein operates within antibiotic biosynthesis. Its function is as follows. Involved in chloramphenicol biosynthesis. Catalyzes the beta-hydroxylation of 4-amino-L-phenylalanine (L-PAPA) covalently bound to CmlP to form L-p-aminophenylserine. This Streptomyces venezuelae (strain ATCC 10712 / CBS 650.69 / DSM 40230 / JCM 4526 / NBRC 13096 / PD 04745) protein is 4-amino-L-phenylalanyl-[CmlP-peptidyl-carrier-protein] 3-hydroxylase.